A 757-amino-acid polypeptide reads, in one-letter code: Zinc finger CCCH domain-containing protein 5 (757 aa).

Residues 1-127 form a disordered region; it reads MEQANEKEEE…REEEERRWKD (127 aa). Positions 13–35 are enriched in basic and acidic residues; the sequence is HEEAAGEKESFEESKEKAAEMSR. Residues 36-50 show a composition bias toward basic residues; that stretch reads KEKRKAMKKLKRKQV. Positions 51–127 are enriched in basic and acidic residues; it reads RKEIAAKERE…REEEERRWKD (77 aa). The C3H1-type 1 zinc-finger motif lies at 240–268; that stretch reads EQDKAHCPFHLKTGACRFGQRCSRVHFYP. Residues 295 to 372 enclose the RRM domain; that stretch reads YTDEEAELCY…KQVNCEFVNI (78 aa). The C3H1-type 2 zinc-finger motif lies at 374–404; that stretch reads RWKVAICGEYMKSRLKTCSRGSACNFIHCFR. The segment at 441–757 is disordered; the sequence is HESSGSLNDS…EEEIERWRPV (317 aa). Residues 444-455 are compositionally biased toward polar residues; that stretch reads SGSLNDSISDLS. Basic and acidic residues predominate over residues 487–546; that stretch reads YHGDTQDSTREDKLRRHAENCHDGDDSPSRDGSLEREMYKERRYAKDTLHRDSRWSEHSP. 2 stretches are compositionally biased toward basic residues: residues 547-557 and 600-609; these read GHRVGRKRIHG and KTHRSSRKHS. 3 stretches are compositionally biased toward basic and acidic residues: residues 610–634, 644–672, and 681–721; these read REGS…DKSH, RSSS…KRSV, and SDKD…ETHK. Residues 722–733 are compositionally biased toward basic residues; that stretch reads ERRHRHRKRRRT.

This Arabidopsis thaliana (Mouse-ear cress) protein is Zinc finger CCCH domain-containing protein 5.